We begin with the raw amino-acid sequence, 616 residues long: Dihydroxy-acid dehydratase (616 aa).

Position 81 (Asp-81) interacts with Mg(2+). Residue Cys-122 participates in [2Fe-2S] cluster binding. The Mg(2+) site is built by Asp-123 and Lys-124. Lys-124 is subject to N6-carboxylysine. Cys-195 serves as a coordination point for [2Fe-2S] cluster. Residue Glu-491 coordinates Mg(2+). Ser-517 serves as the catalytic Proton acceptor.

The protein belongs to the IlvD/Edd family. Homodimer. Requires [2Fe-2S] cluster as cofactor. The cofactor is Mg(2+).

It catalyses the reaction (2R)-2,3-dihydroxy-3-methylbutanoate = 3-methyl-2-oxobutanoate + H2O. The enzyme catalyses (2R,3R)-2,3-dihydroxy-3-methylpentanoate = (S)-3-methyl-2-oxopentanoate + H2O. It functions in the pathway amino-acid biosynthesis; L-isoleucine biosynthesis; L-isoleucine from 2-oxobutanoate: step 3/4. The protein operates within amino-acid biosynthesis; L-valine biosynthesis; L-valine from pyruvate: step 3/4. Its function is as follows. Functions in the biosynthesis of branched-chain amino acids. Catalyzes the dehydration of (2R,3R)-2,3-dihydroxy-3-methylpentanoate (2,3-dihydroxy-3-methylvalerate) into 2-oxo-3-methylpentanoate (2-oxo-3-methylvalerate) and of (2R)-2,3-dihydroxy-3-methylbutanoate (2,3-dihydroxyisovalerate) into 2-oxo-3-methylbutanoate (2-oxoisovalerate), the penultimate precursor to L-isoleucine and L-valine, respectively. This chain is Dihydroxy-acid dehydratase, found in Yersinia enterocolitica serotype O:8 / biotype 1B (strain NCTC 13174 / 8081).